The sequence spans 996 residues: KK-1 biosynthesis cluster protein D (996 aa).

Disordered stretches follow at residues 307–333 (HDTDGEKASTAPIRSNKLSQSKQPELD), 425–449 (EQDNQTNEEGTGEVQSQRDRRARDL), 489–556 (AGVA…ALRA), and 571–602 (STHSIHQRASVNTTAPTVARSSDSDDSDSLHS). 2 stretches are compositionally biased toward polar residues: residues 318-329 (PIRSNKLSQSKQ) and 428-439 (NQTNEEGTGEVQ). 2 stretches are compositionally biased toward basic and acidic residues: residues 440–449 (SQRDRRARDL) and 500–527 (RAAEEGGCREKEAENAKTDEEQVQDKAA). The span at 572-590 (THSIHQRASVNTTAPTVAR) shows a compositional bias: polar residues.

Its pathway is secondary metabolite biosynthesis. Functionally, part of the gene cluster that mediates the biosynthesis of KK-1, a novel cyclic depsipeptide with 10 residues which is a promising active compound with high activity against many plant pathogens, especially Botrytis cinerea. The role of kk1D in KK-1 biosynthesis has still to be determined. The nonribosomal peptide synthetase (NRPS) kk1B catalyzes the elongation and cyclization of the decapeptide chain composed of 1 D-lactic acid residue (D-Lac), 1 pipecolic acid residue (Pip), 1 aspartic acid residue (Asp), 1 isoleucine residue (Ile), 1 glycine residue (Gly), 1 tyrosine residue (Tyr) and 4 valine residues (Val). The Asp, Ile and 3 Val residues are N-methylated by the 5 methyltransferase domains from the NRPS (found in modules 3, 5, 6, 7 and 9), whereas the Tyr residue is O-methylated by the cluster encoded O-methyltransferase kk1A. The thioesterase kk1J is likely to be involved in the corrective mechanism of peptide chain synthesis. The D-lactate dehydrogenase kk1H is involved in the synthesis of D-lactic acid from pyruvic acid, which is recognized by the A domain of the first kk1B module. The pyrroline-5-carboxylate reductase kk1I is involved in the synthesis of the L-pipecolic acid residue of KK-1 from delta-1-pyrroline-5-carboxylate (P5C), a metabolic intermediate of lysine. It is still unclear how kk1C and kk1D are involved in the production of KK-1. The sequence is that of KK-1 biosynthesis cluster protein D from Curvularia clavata.